Reading from the N-terminus, the 469-residue chain is Alpha-galactosidase (469 aa).

The N-terminal stretch at M1–A17 is a signal peptide. A disulfide bond links C41 and C73. The substrate site is built by D71 and D72. N-linked (GlcNAc...) asparagine glycosylation is present at N81. A disulfide bond links C120 and C150. K146 provides a ligand contact to substrate. Residue D148 is the Nucleophile of the active site. N174 carries N-linked (GlcNAc...) asparagine glycosylation. Residue R204 participates in substrate binding. The active-site Proton donor is the D208. 2 disulfide bridges follow: C220–C236 and C222–C229. Substrate is bound at residue Q250. N-linked (GlcNAc...) asparagine glycans are attached at residues N269, N369, N402, N412, N421, N426, and N434.

The protein belongs to the glycosyl hydrolase 27 family. Homotetramer.

The protein resides in the secreted. It catalyses the reaction Hydrolysis of terminal, non-reducing alpha-D-galactose residues in alpha-D-galactosides, including galactose oligosaccharides, galactomannans and galactolipids.. The polypeptide is Alpha-galactosidase (MEL) (Lachancea cidri (Yeast)).